The chain runs to 103 residues: Putative membrane protein insertion efficiency factor (103 aa).

The protein belongs to the UPF0161 family.

It is found in the cell inner membrane. Functionally, could be involved in insertion of integral membrane proteins into the membrane. This Chlamydia felis (strain Fe/C-56) (Chlamydophila felis) protein is Putative membrane protein insertion efficiency factor.